Here is a 578-residue protein sequence, read N- to C-terminus: 2-succinyl-5-enolpyruvyl-6-hydroxy-3-cyclohexene-1-carboxylate synthase (578 aa).

The disordered stretch occupies residues 186–208 (LPAAGGEHHPAEPRSTPWDGPVP).

Belongs to the TPP enzyme family. MenD subfamily. Homodimer. Mg(2+) serves as cofactor. It depends on Mn(2+) as a cofactor. The cofactor is thiamine diphosphate.

The catalysed reaction is isochorismate + 2-oxoglutarate + H(+) = 5-enolpyruvoyl-6-hydroxy-2-succinyl-cyclohex-3-ene-1-carboxylate + CO2. Its pathway is quinol/quinone metabolism; 1,4-dihydroxy-2-naphthoate biosynthesis; 1,4-dihydroxy-2-naphthoate from chorismate: step 2/7. It participates in cofactor biosynthesis; phylloquinone biosynthesis. Catalyzes the thiamine diphosphate-dependent decarboxylation of 2-oxoglutarate and the subsequent addition of the resulting succinic semialdehyde-thiamine pyrophosphate anion to isochorismate to yield 2-succinyl-5-enolpyruvyl-6-hydroxy-3-cyclohexene-1-carboxylate (SEPHCHC). The chain is 2-succinyl-5-enolpyruvyl-6-hydroxy-3-cyclohexene-1-carboxylate synthase from Synechococcus sp. (strain WH7803).